We begin with the raw amino-acid sequence, 457 residues long: F-box/LRR-repeat protein At2g42730 (457 aa).

The 47-residue stretch at 4 to 50 folds into the F-box domain; the sequence is KDVISRLPDEVLGRILSLISTKEAVSTSVLSKRWKNMFVLVSNLDID. LRR repeat units lie at residues 265–288, 292–315, and 318–343; these read MDETRMVGVRNGSLGSIPADMRNL, IRNVRILHLSSHTLELLYFSCKEM, and FDSLVSLSIGNDKARGWQMLPLLIKN.

The polypeptide is F-box/LRR-repeat protein At2g42730 (Arabidopsis thaliana (Mouse-ear cress)).